Reading from the N-terminus, the 749-residue chain is Disintegrin and metalloproteinase domain-containing protein 10 (749 aa).

Positions 1–18 (MGLLRLVFLLSWAASAGG) are cleaved as a signal peptide. Residues 19 to 213 (LYGNPLNKYI…SGPVILRKKR (195 aa)) constitute a propeptide that is removed on maturation. Topologically, residues 19 to 673 (LYGNPLNKYI…NPELYENIAE (655 aa)) are extracellular. A Cysteine switch motif is present at residues 170 to 177 (GGCADSSV). Cys-172 is a binding site for Zn(2+). The Peptidase M12B domain occupies 220-457 (NTCQLFIQTD…KENSCFVESG (238 aa)). Intrachain disulfides connect Cys-222–Cys-314, Cys-345–Cys-452, Cys-400–Cys-436, Cys-461–Cys-496, Cys-472–Cys-485, Cys-474–Cys-480, Cys-484–Cys-516, Cys-504–Cys-512, Cys-511–Cys-537, Cys-525–Cys-544, Cys-531–Cys-563, Cys-556–Cys-568, Cys-573–Cys-599, Cys-581–Cys-608, Cys-583–Cys-598, Cys-595–Cys-640, and Cys-633–Cys-646. Asn-268 and Asn-279 each carry an N-linked (GlcNAc...) asparagine glycan. His-384 contacts Zn(2+). Glu-385 is an active-site residue. Positions 388 and 394 each coordinate Zn(2+). An N-linked (GlcNAc...) asparagine glycan is attached at Asn-440. Residues 458 to 552 (QPICGNGLVE…QCPPSEPREN (95 aa)) enclose the Disintegrin domain. The N-linked (GlcNAc...) asparagine glycan is linked to Asn-552. A helical membrane pass occupies residues 674-694 (WIVAHWWAVLLMGIALIMLMA). At 695–749 (GFIKICSVHTPSSNPKLPPPKPLPGTLKRRRPPQTTQQPSRQRPRENYQMGHMRH) the chain is on the cytoplasmic side. The segment at 705-749 (PSSNPKLPPPKPLPGTLKRRRPPQTTQQPSRQRPRENYQMGHMRH) is disordered. Positions 709–716 (PKLPPPKP) match the SH3-binding motif. Thr-720 carries the phosphothreonine modification. Residues 723 to 729 (RRRPPQT) carry the SH3-binding motif.

Zn(2+) serves as cofactor. The precursor is cleaved by furin and PCSK7.

Its subcellular location is the membrane. It catalyses the reaction Endopeptidase of broad specificity.. Controls the proteolytic processing of Notch and mediates lateral inhibition during neurogenesis. This Xenopus laevis (African clawed frog) protein is Disintegrin and metalloproteinase domain-containing protein 10 (adam10).